Reading from the N-terminus, the 142-residue chain is Chorion protein S16 (142 aa).

A signal peptide spans 1–21; the sequence is MSANYMRLLCLMACCLSICLA.

It belongs to the chorion protein S16 family.

The protein resides in the secreted. Its function is as follows. Chorion membrane (egg shell) protein; plays a role in protecting the egg from the environment. This chain is Chorion protein S16 (Cp16), found in Drosophila grimshawi (Hawaiian fruit fly).